We begin with the raw amino-acid sequence, 187 residues long: Large ribosomal subunit protein bL25 (187 aa).

It belongs to the bacterial ribosomal protein bL25 family. CTC subfamily. Part of the 50S ribosomal subunit; part of the 5S rRNA/L5/L18/L25 subcomplex. Contacts the 5S rRNA. Binds to the 5S rRNA independently of L5 and L18.

In terms of biological role, this is one of the proteins that binds to the 5S RNA in the ribosome where it forms part of the central protuberance. The chain is Large ribosomal subunit protein bL25 from Tropheryma whipplei (strain Twist) (Whipple's bacillus).